The primary structure comprises 165 residues: Pyruvoyl-dependent arginine decarboxylase (165 aa).

Ser53 carries the post-translational modification Pyruvic acid (Ser).

Belongs to the PdaD family. The cofactor is pyruvate.

The catalysed reaction is L-arginine + H(+) = agmatine + CO2. The chain is Pyruvoyl-dependent arginine decarboxylase from Methanococcus aeolicus (strain ATCC BAA-1280 / DSM 17508 / OCM 812 / Nankai-3).